Here is a 327-residue protein sequence, read N- to C-terminus: Phospho-N-acetylmuramoyl-pentapeptide-transferase (327 aa).

10 consecutive transmembrane segments (helical) span residues 3–23 (TAIIAGITTFILTIIGIPAFI), 51–71 (TMGGTVFLLASIVASFVIALF), 79–99 (VTTILFILFLYGLVGFLDDFL), 115–135 (LFLQLVGGVVFYLFFERHGGG), 140–160 (VFGFPLELGFLYIFFVLFWLV), 172–192 (IDGLASISVVISLGAYAVIAL), 197–217 (FDLLIVIFSMIGGLLGFFGFN), 223–243 (IFMGDVGSLALGGMLAALSIA), 248–268 (WTLLLIGIVYVFETASVMLQV), and 306–326 (VDFLFWGIGLVASLITLAILY).

This sequence belongs to the glycosyltransferase 4 family. MraY subfamily. Mg(2+) is required as a cofactor.

Its subcellular location is the cell membrane. It catalyses the reaction UDP-N-acetyl-alpha-D-muramoyl-L-alanyl-gamma-D-glutamyl-L-lysyl-D-alanyl-D-alanine + di-trans,octa-cis-undecaprenyl phosphate = Mur2Ac(oyl-L-Ala-gamma-D-Glu-L-Lys-D-Ala-D-Ala)-di-trans,octa-cis-undecaprenyl diphosphate + UMP. It participates in cell wall biogenesis; peptidoglycan biosynthesis. Its function is as follows. Catalyzes the initial step of the lipid cycle reactions in the biosynthesis of the cell wall peptidoglycan: transfers peptidoglycan precursor phospho-MurNAc-pentapeptide from UDP-MurNAc-pentapeptide onto the lipid carrier undecaprenyl phosphate, yielding undecaprenyl-pyrophosphoryl-MurNAc-pentapeptide, known as lipid I. In Streptococcus gordonii (strain Challis / ATCC 35105 / BCRC 15272 / CH1 / DL1 / V288), this protein is Phospho-N-acetylmuramoyl-pentapeptide-transferase.